Reading from the N-terminus, the 216-residue chain is uncharacterized protein (216 aa).

Positions 8 to 63 (LKTLMTSVHINASELARRTGIAQPIIHRLSTGQNTNPKLATIKPIARYFMVNISQL) constitute an HTH cro/C1-type domain. A DNA-binding region (H-T-H motif) is located at residues 19-38 (ASELARRTGIAQPIIHRLST).

This is an uncharacterized protein from Coxiella burnetii (strain RSA 493 / Nine Mile phase I).